The following is a 466-amino-acid chain: uncharacterized protein (466 aa).

It belongs to the myoviridae tail sheath protein family.

This is an uncharacterized protein from Bacillus subtilis (strain 168).